The primary structure comprises 281 residues: Small ribosomal subunit protein uS2 (281 aa).

Residues 233–281 (NKAEGEAAEQPMAAWEKELLTNEAPAEASAEAAAPAAAEGETAEAPKAE) are disordered. A compositionally biased stretch (low complexity) spans 255–275 (EAPAEASAEAAAPAAAEGETA).

Belongs to the universal ribosomal protein uS2 family.

This Bifidobacterium longum (strain DJO10A) protein is Small ribosomal subunit protein uS2.